We begin with the raw amino-acid sequence, 205 residues long: Outer-membrane lipoprotein LolB (205 aa).

Positions 1-17 (MFLRHCITFTLIALLAG) are cleaved as a signal peptide. C18 is lipidated: N-palmitoyl cysteine. Residue C18 is the site of S-diacylglycerol cysteine attachment.

The protein belongs to the LolB family. In terms of assembly, monomer.

It localises to the cell outer membrane. In terms of biological role, plays a critical role in the incorporation of lipoproteins in the outer membrane after they are released by the LolA protein. This is Outer-membrane lipoprotein LolB from Pseudomonas putida (strain GB-1).